Here is a 627-residue protein sequence, read N- to C-terminus: Glyco-Gag protein (627 aa).

Residues 1–63 lie on the Cytoplasmic side of the membrane; the sequence is LGDVPRTSGA…FLLSVWNRSR (63 aa). A helical transmembrane segment spans residues 64–86; the sequence is AARLVCCSIVLCCLCLTVFLYLS. Over 87-627 the chain is Extracellular; that stretch reads ENMGQTVTTP…PQASLLTLDD (541 aa). Asn-113 is a glycosylation site (N-linked (GlcNAc...) asparagine; by host). The segment covering 199–215 has biased composition (pro residues); that stretch reads PPSAPSLPPEPPFPTPP. Disordered regions lie at residues 199–310 and 523–627; these read PPSA…RQGG and RETP…TLDD. Basic and acidic residues-rich tracts occupy residues 523–555 and 575–608; these read RETP…EKER and RQDR…DCPK. The CCHC-type zinc finger occupies 593–608; it reads CAYCKEKGHWARDCPK.

In terms of processing, glycosylated by host. Post-translationally, cleaved by host near the middle of the molecule, releasing the c-terminal half containing capsid and nucleoprotein domains op GAG.

It localises to the host cell membrane. In terms of biological role, plays a role in viral particle release. Presumably acts by facilitating the fission of the virion bud at the cell surface. May prevent the antiviral activity of murine APOBEC3. This chain is Glyco-Gag protein, found in Friend murine leukemia virus (isolate 57) (FrMLV).